We begin with the raw amino-acid sequence, 129 residues long: uncharacterized protein (129 aa).

It to M.pneumoniae MPN_376 N-terminal region.

This is an uncharacterized protein from Mycoplasma pneumoniae (strain ATCC 29342 / M129 / Subtype 1) (Mycoplasmoides pneumoniae).